The following is a 60-amino-acid chain: UPF0434 protein SG0997 (60 aa).

This sequence belongs to the UPF0434 family.

The protein is UPF0434 protein SG0997 of Sodalis glossinidius (strain morsitans).